The following is a 360-amino-acid chain: S-adenosylmethionine:tRNA ribosyltransferase-isomerase (360 aa).

This sequence belongs to the QueA family. In terms of assembly, monomer.

It is found in the cytoplasm. It catalyses the reaction 7-aminomethyl-7-carbaguanosine(34) in tRNA + S-adenosyl-L-methionine = epoxyqueuosine(34) in tRNA + adenine + L-methionine + 2 H(+). Its pathway is tRNA modification; tRNA-queuosine biosynthesis. In terms of biological role, transfers and isomerizes the ribose moiety from AdoMet to the 7-aminomethyl group of 7-deazaguanine (preQ1-tRNA) to give epoxyqueuosine (oQ-tRNA). This is S-adenosylmethionine:tRNA ribosyltransferase-isomerase from Rhodopseudomonas palustris (strain TIE-1).